The primary structure comprises 258 residues: Translocon-associated protein subunit alpha (258 aa).

An N-terminal signal peptide occupies residues Met1 to Cys24. Residues Gln25–Ser190 are Lumenal-facing. Residues Asn57, Asn119, and Asn127 are each glycosylated (N-linked (GlcNAc...) asparagine). A helical membrane pass occupies residues Val191–Tyr209. The Cytoplasmic portion of the chain corresponds to Ser210–Asn258.

It belongs to the TRAP-alpha family. Heterotetramer of TRAP-alpha, TRAP-beta, TRAP-delta and TRAP-gamma. In terms of processing, phosphorylated in its cytoplasmic tail.

It localises to the endoplasmic reticulum membrane. Functionally, TRAP proteins are part of a complex whose function is to bind calcium to the ER membrane and thereby regulate the retention of ER resident proteins. May be involved in the recycling of the translocation apparatus after completion of the translocation process or may function as a membrane-bound chaperone facilitating folding of translocated proteins. In Arabidopsis thaliana (Mouse-ear cress), this protein is Translocon-associated protein subunit alpha.